Consider the following 91-residue polypeptide: Small ribosomal subunit protein bS16 (91 aa).

The protein belongs to the bacterial ribosomal protein bS16 family.

The polypeptide is Small ribosomal subunit protein bS16 (Ruthia magnifica subsp. Calyptogena magnifica).